The sequence spans 460 residues: tRNA(Ile)-lysidine synthase (460 aa).

Residue 30 to 35 (SGGLDS) participates in ATP binding.

Belongs to the tRNA(Ile)-lysidine synthase family.

It is found in the cytoplasm. The enzyme catalyses cytidine(34) in tRNA(Ile2) + L-lysine + ATP = lysidine(34) in tRNA(Ile2) + AMP + diphosphate + H(+). Functionally, ligates lysine onto the cytidine present at position 34 of the AUA codon-specific tRNA(Ile) that contains the anticodon CAU, in an ATP-dependent manner. Cytidine is converted to lysidine, thus changing the amino acid specificity of the tRNA from methionine to isoleucine. The sequence is that of tRNA(Ile)-lysidine synthase from Yersinia pestis.